Reading from the N-terminus, the 404-residue chain is Lipase lipl-3 (404 aa).

Residues 1-20 (MCSSLCALLLVILAVHNVHA) form the signal peptide. Asn65 carries an N-linked (GlcNAc...) asparagine glycan. The active-site Nucleophile is Ser168. N-linked (GlcNAc...) asparagine glycosylation is present at Asn272. Residues Asp344 and His376 each act as charge relay system in the active site.

This sequence belongs to the AB hydrolase superfamily. Lipase family.

Its subcellular location is the secreted. The protein localises to the lysosome lumen. In terms of biological role, lipase that, together with lipl-1, plays a role in the response to nutrient deprivation by controlling lipid metabolism. Specifically, involved in the breakdown of lipids during lipophagy, a process during which lipids contained in lipid droplets that have been delivered to lysosomes by autophagy are degraded. This chain is Lipase lipl-3, found in Caenorhabditis elegans.